A 290-amino-acid chain; its full sequence is Agroclavine dehydrogenase (290 aa).

This sequence belongs to the fgaFS/easG family. In terms of assembly, monomer.

It catalyses the reaction agroclavine + NADP(+) = didehydroagroclavine + NADPH + H(+). The protein operates within alkaloid biosynthesis; ergot alkaloid biosynthesis. Agroclavine dehydrogenase; part of the gene cluster that mediates the biosynthesis of fungal ergot alkaloid. DmaW catalyzes the first step of ergot alkaloid biosynthesis by condensing dimethylallyl diphosphate (DMAP) and tryptophan to form 4-dimethylallyl-L-tryptophan. The second step is catalyzed by the methyltransferase easF that methylates 4-dimethylallyl-L-tryptophan in the presence of S-adenosyl-L-methionine, resulting in the formation of 4-dimethylallyl-L-abrine. The catalase easC and the FAD-dependent oxidoreductase easE then transform 4-dimethylallyl-L-abrine to chanoclavine-I which is further oxidized by easD in the presence of NAD(+), resulting in the formation of chanoclavine-I aldehyde. Agroclavine dehydrogenase easG then mediates the conversion of chanoclavine-I aldehyde to agroclavine via a non-enzymatic adduct reaction: the substrate is an iminium intermediate that is formed spontaneously from chanoclavine-I aldehyde in the presence of glutathione. The presence of easA is not required to complete this reaction. Further conversion of agroclavine to paspalic acid is a two-step process involving oxidation of agroclavine to elymoclavine and of elymoclavine to paspalic acid, the second step being performed by the elymoclavine oxidase cloA. Paspalic acid is then further converted to D-lysergic acid. Ergopeptines are assembled from D-lysergic acid and three different amino acids by the D-lysergyl-peptide-synthetases composed each of a monomudular and a trimodular nonribosomal peptide synthetase subunit. LpsB and lpsC encode the monomodular subunits responsible for D-lysergic acid activation and incorporation into the ergopeptine backbone. LpsA1 and A2 subunits encode the trimodular nonribosomal peptide synthetase assembling the tripeptide portion of ergopeptines. LpsA1 is responsible for formation of the major ergopeptine, ergotamine, and lpsA2 for alpha-ergocryptine, the minor ergopeptine of the total alkaloid mixture elaborated by C.purpurea. D-lysergyl-tripeptides are assembled by the nonribosomal peptide synthetases and released as N-(D-lysergyl-aminoacyl)-lactams. Cyclolization of the D-lysergyl-tripeptides is performed by the Fe(2+)/2-ketoglutarate-dependent dioxygenase easH which introduces a hydroxyl group into N-(D-lysergyl-aminoacyl)-lactam at alpha-C of the aminoacyl residue followed by spontaneous condensation with the terminal lactam carbonyl group. This is Agroclavine dehydrogenase from Claviceps purpurea (strain 20.1) (Ergot fungus).